A 360-amino-acid chain; its full sequence is Phospho-N-acetylmuramoyl-pentapeptide-transferase (360 aa).

10 helical membrane-spanning segments follow: residues 21–41 (YLSF…LWMG), 73–93 (TMGG…WADL), 94–114 (TNPY…VGFV), 132–152 (WKYF…YAHG), 168–188 (VMPQ…VGTS), 199–219 (GLAI…AWAT), 239–259 (LVVV…FNTY), 263–283 (VFMG…IAVL), 288–308 (FVLV…ILQV), and 338–358 (VIVR…ATLK).

This sequence belongs to the glycosyltransferase 4 family. MraY subfamily. Requires Mg(2+) as cofactor.

Its subcellular location is the cell inner membrane. It carries out the reaction UDP-N-acetyl-alpha-D-muramoyl-L-alanyl-gamma-D-glutamyl-meso-2,6-diaminopimeloyl-D-alanyl-D-alanine + di-trans,octa-cis-undecaprenyl phosphate = di-trans,octa-cis-undecaprenyl diphospho-N-acetyl-alpha-D-muramoyl-L-alanyl-D-glutamyl-meso-2,6-diaminopimeloyl-D-alanyl-D-alanine + UMP. The protein operates within cell wall biogenesis; peptidoglycan biosynthesis. Catalyzes the initial step of the lipid cycle reactions in the biosynthesis of the cell wall peptidoglycan: transfers peptidoglycan precursor phospho-MurNAc-pentapeptide from UDP-MurNAc-pentapeptide onto the lipid carrier undecaprenyl phosphate, yielding undecaprenyl-pyrophosphoryl-MurNAc-pentapeptide, known as lipid I. The protein is Phospho-N-acetylmuramoyl-pentapeptide-transferase of Vibrio cholerae serotype O1 (strain M66-2).